A 348-amino-acid polypeptide reads, in one-letter code: NADH-quinone oxidoreductase subunit H (348 aa).

The next 8 helical transmembrane spans lie at 10–30, 82–102, 115–135, 161–181, 199–219, 251–271, 287–307, and 322–342; these read LPLF…LVLI, GVFL…WAVV, VGLL…IMGG, IGFV…TTIV, LLDW…ISAL, LFFL…TILF, VPGV…FAMV, and LGWK…AAIL.

This sequence belongs to the complex I subunit 1 family. In terms of assembly, NDH-1 is composed of 14 different subunits. Subunits NuoA, H, J, K, L, M, N constitute the membrane sector of the complex.

The protein localises to the cell inner membrane. The enzyme catalyses a quinone + NADH + 5 H(+)(in) = a quinol + NAD(+) + 4 H(+)(out). In terms of biological role, NDH-1 shuttles electrons from NADH, via FMN and iron-sulfur (Fe-S) centers, to quinones in the respiratory chain. The immediate electron acceptor for the enzyme in this species is believed to be ubiquinone. Couples the redox reaction to proton translocation (for every two electrons transferred, four hydrogen ions are translocated across the cytoplasmic membrane), and thus conserves the redox energy in a proton gradient. This subunit may bind ubiquinone. The polypeptide is NADH-quinone oxidoreductase subunit H (Bartonella bacilliformis (strain ATCC 35685 / KC583 / Herrer 020/F12,63)).